We begin with the raw amino-acid sequence, 33 residues long: Photosystem II reaction center protein Psb30 (33 aa).

A helical transmembrane segment spans residues 5–25 (IVFQLTALLFVVAAGPLVIVL).

This sequence belongs to the Psb30/Ycf12 family. PSII is composed of 1 copy each of membrane proteins PsbA, PsbB, PsbC, PsbD, PsbE, PsbF, PsbH, PsbI, PsbJ, PsbK, PsbL, PsbM, PsbT, PsbX, PsbY, PsbZ, Psb30/Ycf12, peripheral proteins of the oxygen-evolving complex and a large number of cofactors. It forms dimeric complexes.

Its subcellular location is the plastid. The protein resides in the chloroplast thylakoid membrane. Functionally, a core subunit of photosystem II (PSII), probably helps stabilize the reaction center. This Chlorella vulgaris (Green alga) protein is Photosystem II reaction center protein Psb30.